A 377-amino-acid polypeptide reads, in one-letter code: Cobalt-precorrin-5B C(1)-methyltransferase (377 aa).

Belongs to the CbiD family.

The catalysed reaction is Co-precorrin-5B + S-adenosyl-L-methionine = Co-precorrin-6A + S-adenosyl-L-homocysteine. It participates in cofactor biosynthesis; adenosylcobalamin biosynthesis; cob(II)yrinate a,c-diamide from sirohydrochlorin (anaerobic route): step 6/10. Functionally, catalyzes the methylation of C-1 in cobalt-precorrin-5B to form cobalt-precorrin-6A. This chain is Cobalt-precorrin-5B C(1)-methyltransferase, found in Alkaliphilus metalliredigens (strain QYMF).